The sequence spans 798 residues: Transferrin receptor protein 2 (798 aa).

Residues 1-81 (MEQRWGLLRK…WAAAGRKAAP (81 aa)) are Cytoplasmic-facing. The short motif at 23–26 (YRRV) is the Endocytosis signal element. Positions 25 to 44 (RVEGPQLENLEEEDREEGEE) are disordered. The segment covering 33-44 (NLEEEDREEGEE) has biased composition (acidic residues). The chain crosses the membrane as a helical; Signal-anchor for type II membrane protein span at residues 82 to 102 (YLVLTTLLIFTGAFLLGYVAF). The Extracellular segment spans residues 103–798 (RGSCQACGDS…GDVWNIDNNF (696 aa)). N-linked (GlcNAc...) asparagine glycosylation is found at N235, N334, and N535.

The protein belongs to the peptidase M28 family. M28B subfamily. In terms of assembly, homodimer.

It is found in the cell membrane. Functionally, mediates cellular uptake of transferrin-bound iron in a non-iron dependent manner. May be involved in iron metabolism, hepatocyte function and erythrocyte differentiation. This Rattus norvegicus (Rat) protein is Transferrin receptor protein 2 (Tfr2).